Reading from the N-terminus, the 282-residue chain is tRNA N(3)-cytidine methyltransferase METTL6 (282 aa).

S-adenosyl-L-methionine-binding residues include Trp-45, Tyr-49, Gly-87, Asp-110, Asp-136, Leu-137, and Ile-157.

It belongs to the methyltransferase superfamily. METL family. As to quaternary structure, monomer. Interacts with SARS1/SerRS; interaction is mediated via tRNA(Ser) and is required for N(3)-methylcytidine methylation.

The protein resides in the cytoplasm. Its subcellular location is the nucleus. The enzyme catalyses cytidine(32) in tRNA(Ser) + S-adenosyl-L-methionine = N(3)-methylcytidine(32) in tRNA(Ser) + S-adenosyl-L-homocysteine + H(+). S-adenosyl-L-methionine-dependent methyltransferase that mediates N(3)-methylcytidine modification of residue 32 of the tRNA anticodon loop of tRNA(Ser), including tRNA(Ser)(UGA) and tRNA(Ser)(GCU). Interaction with SARS1/SerRS is required for N(3)-methylcytidine methylation. This is tRNA N(3)-cytidine methyltransferase METTL6 (METTL6) from Pongo abelii (Sumatran orangutan).